The primary structure comprises 98 residues: NADH-ubiquinone oxidoreductase chain 4L (98 aa).

3 helical membrane passes run 1–21 (MPIIYMNIMLAFTISLLGMLI), 29–49 (SLLCLEGMMLSLFIMNTLMAL), and 58–78 (IVPITLLVFAACEAAVGLALL).

The protein belongs to the complex I subunit 4L family. As to quaternary structure, core subunit of respiratory chain NADH dehydrogenase (Complex I) which is composed of 45 different subunits.

Its subcellular location is the mitochondrion inner membrane. The catalysed reaction is a ubiquinone + NADH + 5 H(+)(in) = a ubiquinol + NAD(+) + 4 H(+)(out). Its function is as follows. Core subunit of the mitochondrial membrane respiratory chain NADH dehydrogenase (Complex I) which catalyzes electron transfer from NADH through the respiratory chain, using ubiquinone as an electron acceptor. Part of the enzyme membrane arm which is embedded in the lipid bilayer and involved in proton translocation. The chain is NADH-ubiquinone oxidoreductase chain 4L (MT-ND4L) from Colobus guereza (Mantled guereza).